The primary structure comprises 217 residues: Uracil-DNA glycosylase (217 aa).

The active-site Proton acceptor is Asp-62.

This sequence belongs to the uracil-DNA glycosylase (UDG) superfamily. UNG family.

It is found in the cytoplasm. It carries out the reaction Hydrolyzes single-stranded DNA or mismatched double-stranded DNA and polynucleotides, releasing free uracil.. In terms of biological role, excises uracil residues from the DNA which can arise as a result of misincorporation of dUMP residues by DNA polymerase or due to deamination of cytosine. This is Uracil-DNA glycosylase from Streptococcus pyogenes serotype M28 (strain MGAS6180).